A 211-amino-acid chain; its full sequence is SsrA-binding protein (211 aa).

Positions Lys-168–Asn-211 are disordered. The segment covering Gln-177–Pro-186 has biased composition (polar residues). Basic residues predominate over residues Arg-196–Asn-211.

The protein belongs to the SmpB family.

It is found in the cytoplasm. Required for rescue of stalled ribosomes mediated by trans-translation. Binds to transfer-messenger RNA (tmRNA), required for stable association of tmRNA with ribosomes. tmRNA and SmpB together mimic tRNA shape, replacing the anticodon stem-loop with SmpB. tmRNA is encoded by the ssrA gene; the 2 termini fold to resemble tRNA(Ala) and it encodes a 'tag peptide', a short internal open reading frame. During trans-translation Ala-aminoacylated tmRNA acts like a tRNA, entering the A-site of stalled ribosomes, displacing the stalled mRNA. The ribosome then switches to translate the ORF on the tmRNA; the nascent peptide is terminated with the 'tag peptide' encoded by the tmRNA and targeted for degradation. The ribosome is freed to recommence translation, which seems to be the essential function of trans-translation. The polypeptide is SsrA-binding protein (Tropheryma whipplei (strain Twist) (Whipple's bacillus)).